A 128-amino-acid polypeptide reads, in one-letter code: Calcitonin gene-related peptide 1 (128 aa).

A signal peptide spans 1-25 (MGFLKFSPFLVVSILLLYQACSLQA). The propeptide occupies 26 to 80 (VPLRSILESSPGMATLSEEEVRLLAALVQDYMQMKARELEQEEEQEAEGSSVTAQ). A disulfide bridge connects residues Cys84 and Cys89. Position 119 is a phenylalanine amide (Phe119). A propeptide spanning residues 125-128 (DLQA) is cleaved from the precursor.

Belongs to the calcitonin family. In terms of tissue distribution, detected in nerve cells of cerebrum, hippocampus and pons/midbrain in newborns, and only in nerve cells of pons/midbrain in adult.

It is found in the secreted. CGRP1/CALCA is a peptide hormone that induces vasodilation mediated by the CALCRL-RAMP1 receptor complex. Dilates a variety of vessels including the coronary, cerebral and systemic vasculature. Its abundance in the CNS also points toward a neurotransmitter or neuromodulator role. It also elevates platelet cAMP. CGRP1 can also bind and activate CALCR-RAMP1 (AMYR1) receptor complex. The chain is Calcitonin gene-related peptide 1 from Mus musculus (Mouse).